We begin with the raw amino-acid sequence, 314 residues long: Ribosomal RNA small subunit methyltransferase H (314 aa).

S-adenosyl-L-methionine contacts are provided by residues 58 to 60 (GGH), D76, F103, D119, and Q126.

It belongs to the methyltransferase superfamily. RsmH family.

It is found in the cytoplasm. The catalysed reaction is cytidine(1402) in 16S rRNA + S-adenosyl-L-methionine = N(4)-methylcytidine(1402) in 16S rRNA + S-adenosyl-L-homocysteine + H(+). Functionally, specifically methylates the N4 position of cytidine in position 1402 (C1402) of 16S rRNA. This is Ribosomal RNA small subunit methyltransferase H from Gloeobacter violaceus (strain ATCC 29082 / PCC 7421).